A 159-amino-acid chain; its full sequence is Cell division protein SepF (159 aa).

The segment at 23-69 (DYIEEDEEQKPASKSAFDSDHTVTPLASTTAPAASSTTKPFPGGRVN) is disordered. Residues 44-64 (TVTPLASTTAPAASSTTKPFP) are compositionally biased toward low complexity.

The protein belongs to the SepF family. In terms of assembly, homodimer. Interacts with FtsZ.

The protein resides in the cytoplasm. Its function is as follows. Cell division protein that is part of the divisome complex and is recruited early to the Z-ring. Probably stimulates Z-ring formation, perhaps through the cross-linking of FtsZ protofilaments. Its function overlaps with FtsA. The protein is Cell division protein SepF of Bifidobacterium longum (strain DJO10A).